We begin with the raw amino-acid sequence, 261 residues long: DNA repair protein RecO (261 aa).

Belongs to the RecO family.

Its function is as follows. Involved in DNA repair and RecF pathway recombination. This Gloeobacter violaceus (strain ATCC 29082 / PCC 7421) protein is DNA repair protein RecO.